A 258-amino-acid polypeptide reads, in one-letter code: Ciliogenesis and planar polarity effector 2 (258 aa).

Positions 51-258 are small GTPase-like; it reads IDTASYKIFV…LPSSPESAPG (208 aa). GTP contacts are provided by serine 64, glycine 65, glycine 67, lysine 68, threonine 69, alanine 70, isoleucine 82, histidine 84, threonine 87, lysine 176, aspartate 178, and serine 206.

Belongs to the small GTPase superfamily. Rab family. In terms of assembly, interacts with FUZ. Associates with the CPLANE (ciliogenesis and planar polarity effectors) complex via its interaction with FUZ.

It is found in the cytoplasm. It localises to the cytoskeleton. The protein localises to the cilium basal body. The protein resides in the microtubule organizing center. Its subcellular location is the centrosome. It is found in the centriole. Functionally, required for efficient primary cilia initiation, regulating a late step in cilia initiation. Plays a role in the final maturation of the mother centriole and ciliary vesicle that allows extension of the ciliary axoneme. The chain is Ciliogenesis and planar polarity effector 2 (Cplane2) from Mus musculus (Mouse).